Here is a 71-residue protein sequence, read N- to C-terminus: uncharacterized protein (71 aa).

Its subcellular location is the plastid. The protein resides in the chloroplast. This is an uncharacterized protein from Mesostigma viride (Green alga).